Reading from the N-terminus, the 125-residue chain is Small ribosomal subunit protein uS13 (125 aa).

Residues 90 to 125 form a disordered region; it reads QRHRKGLPVRGQRTKTNARTRKGPKRTVAGKKKATK.

The protein belongs to the universal ribosomal protein uS13 family. As to quaternary structure, part of the 30S ribosomal subunit. Forms a loose heterodimer with protein S19. Forms two bridges to the 50S subunit in the 70S ribosome.

Its function is as follows. Located at the top of the head of the 30S subunit, it contacts several helices of the 16S rRNA. In the 70S ribosome it contacts the 23S rRNA (bridge B1a) and protein L5 of the 50S subunit (bridge B1b), connecting the 2 subunits; these bridges are implicated in subunit movement. Contacts the tRNAs in the A and P-sites. The polypeptide is Small ribosomal subunit protein uS13 (Bifidobacterium longum subsp. infantis (strain ATCC 15697 / DSM 20088 / JCM 1222 / NCTC 11817 / S12)).